Here is a 74-residue protein sequence, read N- to C-terminus: MGKVRINVVKRTARKLLQMYPDLFTRDFEHNKKVVSQLIEVNSKKLRNQIAGYITHLKKVEERRQKVELREEYL.

This sequence belongs to the eukaryotic ribosomal protein eS17 family.

In Ignicoccus hospitalis (strain KIN4/I / DSM 18386 / JCM 14125), this protein is Small ribosomal subunit protein eS17.